The primary structure comprises 620 residues: 1-deoxy-D-xylulose-5-phosphate synthase (620 aa).

Thiamine diphosphate-binding positions include His-80 and 121–123; that span reads GHS. Residue Asp-152 coordinates Mg(2+). Residues 153-154, Asn-181, Tyr-288, and Glu-370 each bind thiamine diphosphate; that span reads GA. Asn-181 lines the Mg(2+) pocket.

It belongs to the transketolase family. DXPS subfamily. As to quaternary structure, homodimer. Mg(2+) is required as a cofactor. Thiamine diphosphate serves as cofactor.

The catalysed reaction is D-glyceraldehyde 3-phosphate + pyruvate + H(+) = 1-deoxy-D-xylulose 5-phosphate + CO2. It functions in the pathway metabolic intermediate biosynthesis; 1-deoxy-D-xylulose 5-phosphate biosynthesis; 1-deoxy-D-xylulose 5-phosphate from D-glyceraldehyde 3-phosphate and pyruvate: step 1/1. Its function is as follows. Catalyzes the acyloin condensation reaction between C atoms 2 and 3 of pyruvate and glyceraldehyde 3-phosphate to yield 1-deoxy-D-xylulose-5-phosphate (DXP). The sequence is that of 1-deoxy-D-xylulose-5-phosphate synthase from Citrobacter koseri (strain ATCC BAA-895 / CDC 4225-83 / SGSC4696).